Consider the following 541-residue polypeptide: Chaperonin GroEL (541 aa).

ATP is bound by residues Thr30 to Pro33, Lys51, Asp87 to Thr91, Gly415, Asn479 to Ala481, and Asp495.

The protein belongs to the chaperonin (HSP60) family. Forms a cylinder of 14 subunits composed of two heptameric rings stacked back-to-back. Interacts with the co-chaperonin GroES.

The protein localises to the cytoplasm. The catalysed reaction is ATP + H2O + a folded polypeptide = ADP + phosphate + an unfolded polypeptide.. Together with its co-chaperonin GroES, plays an essential role in assisting protein folding. The GroEL-GroES system forms a nano-cage that allows encapsulation of the non-native substrate proteins and provides a physical environment optimized to promote and accelerate protein folding. This is Chaperonin GroEL from Acinetobacter baumannii (strain SDF).